We begin with the raw amino-acid sequence, 312 residues long: Olfactory receptor 8K3 (312 aa).

Residues 1–25 (MEQHNLTTVNEFILTGITDIAELQA) lie on the Extracellular side of the membrane. N-linked (GlcNAc...) asparagine glycosylation occurs at N5. The helical transmembrane segment at 26-46 (PLFALFLMIYVISVMGNLGMI) threads the bilayer. Residues 47–54 (VLTKLDSR) lie on the Cytoplasmic side of the membrane. Residues 55–75 (LQTPMYFFLRHLAFMDLGYST) form a helical membrane-spanning segment. The Extracellular segment spans residues 76–99 (TVGPKMLVNFVVDKNIISYYFCAT). Cysteines 97 and 189 form a disulfide. A helical membrane pass occupies residues 100-120 (QLAFFLVFIGSELFILSAMSY). Topologically, residues 121–139 (DLYVAICNPLLYTVIMSRR) are cytoplasmic. The chain crosses the membrane as a helical span at residues 140-160 (VCQVLVAIPYLYCTFISLLVT). The Extracellular segment spans residues 161–197 (IKIFTLSFCGYNVISHFYCDSLPLLPLLCSNTHEIEL). A helical transmembrane segment spans residues 198-217 (IILIFAAIDLISSLLIVLLS). The Cytoplasmic segment spans residues 218–236 (YLLILVAILRMNSAGRQKA). Residues 237–257 (FSTCGAHLTVVIVFYGTLLFM) form a helical membrane-spanning segment. At 258-270 (YVQPKSSHSFDTD) the chain is on the extracellular side. A helical transmembrane segment spans residues 271-291 (KVASIFYTLVIPMLNPLIYSL). Topologically, residues 292-312 (RNKDVKYALRRTWNNLCNIFV) are cytoplasmic.

Belongs to the G-protein coupled receptor 1 family.

It is found in the cell membrane. Functionally, odorant receptor. This Homo sapiens (Human) protein is Olfactory receptor 8K3 (OR8K3).